Reading from the N-terminus, the 225-residue chain is MSVASTSSGFTPFSRRRGPLDPLFAEVDRALRVLSGAASSARPYPASAAEPVPPLSDQQKRHAAGLMRVNHVGEVCAQALYRGQAAACREAPVRELLLHAAAEEVDHLAWCGRRLEELGSRPSLLNPLWYAGSFTLGVLASCAGTARNLGFMAETERQVEAHLDGHLRSLPEADQRSRQIVSQMKDDEAQHRASAERAGGVPLPAPVRGAMRAMSRLMTSTAYWI.

Polar residues predominate over residues 1 to 11; the sequence is MSVASTSSGFT. Residues 1 to 20 form a disordered region; sequence MSVASTSSGFTPFSRRRGPL. Glutamate 74, glutamate 104, histidine 107, glutamate 156, glutamate 188, and histidine 191 together coordinate Fe cation. A disordered region spans residues 181-203; that stretch reads VSQMKDDEAQHRASAERAGGVPL. Residues 184–195 show a composition bias toward basic and acidic residues; sequence MKDDEAQHRASA.

Belongs to the COQ7 family. Requires Fe cation as cofactor.

It localises to the cell membrane. The enzyme catalyses a 5-methoxy-2-methyl-3-(all-trans-polyprenyl)benzene-1,4-diol + AH2 + O2 = a 3-demethylubiquinol + A + H2O. It participates in cofactor biosynthesis; ubiquinone biosynthesis. In terms of biological role, catalyzes the hydroxylation of 2-nonaprenyl-3-methyl-6-methoxy-1,4-benzoquinol during ubiquinone biosynthesis. In Bordetella petrii (strain ATCC BAA-461 / DSM 12804 / CCUG 43448), this protein is 3-demethoxyubiquinol 3-hydroxylase.